We begin with the raw amino-acid sequence, 218 residues long: GTP cyclohydrolase 1 (218 aa).

Positions 107, 110, and 178 each coordinate Zn(2+).

The protein belongs to the GTP cyclohydrolase I family. Homomer.

The enzyme catalyses GTP + H2O = 7,8-dihydroneopterin 3'-triphosphate + formate + H(+). Its pathway is cofactor biosynthesis; 7,8-dihydroneopterin triphosphate biosynthesis; 7,8-dihydroneopterin triphosphate from GTP: step 1/1. The protein is GTP cyclohydrolase 1 of Azorhizobium caulinodans (strain ATCC 43989 / DSM 5975 / JCM 20966 / LMG 6465 / NBRC 14845 / NCIMB 13405 / ORS 571).